A 350-amino-acid polypeptide reads, in one-letter code: Biotin synthase (350 aa).

In terms of domain architecture, Radical SAM core spans 38–256 (NYVQVSTLLS…IAVARIMMPE (219 aa)). The [4Fe-4S] cluster site is built by Cys53, Cys57, and Cys60. [2Fe-2S] cluster is bound by residues Cys97, Cys128, Cys188, and Arg260.

The protein belongs to the radical SAM superfamily. Biotin synthase family. In terms of assembly, homodimer. Requires [4Fe-4S] cluster as cofactor. It depends on [2Fe-2S] cluster as a cofactor.

The enzyme catalyses (4R,5S)-dethiobiotin + (sulfur carrier)-SH + 2 reduced [2Fe-2S]-[ferredoxin] + 2 S-adenosyl-L-methionine = (sulfur carrier)-H + biotin + 2 5'-deoxyadenosine + 2 L-methionine + 2 oxidized [2Fe-2S]-[ferredoxin]. The protein operates within cofactor biosynthesis; biotin biosynthesis; biotin from 7,8-diaminononanoate: step 2/2. Catalyzes the conversion of dethiobiotin (DTB) to biotin by the insertion of a sulfur atom into dethiobiotin via a radical-based mechanism. The chain is Biotin synthase from Aliivibrio salmonicida (strain LFI1238) (Vibrio salmonicida (strain LFI1238)).